The following is a 254-amino-acid chain: Probable glutathione transferase omega-2 (254 aa).

The GST N-terminal domain occupies 25–105 (GTIRIYNMRY…YLDDIYPEPR (81 aa)). Cysteine 35 (nucleophile) is an active-site residue. Glutathione contacts are provided by residues lysine 62, valine 75, and 89–90 (ES). The 130-residue stretch at 110–239 (DHYEKVQQKL…SQPTETAVEF (130 aa)) folds into the GST C-terminal domain.

Belongs to the GST superfamily. Omega family.

The enzyme catalyses RX + glutathione = an S-substituted glutathione + a halide anion + H(+). It carries out the reaction L-dehydroascorbate + 2 glutathione = glutathione disulfide + L-ascorbate. The catalysed reaction is methylarsonate + 2 glutathione + H(+) = methylarsonous acid + glutathione disulfide + H2O. Functionally, exhibits glutathione-dependent thiol transferase activity. Has dehydroascorbate reductase activity and may contribute to the recycling of ascorbic acid. Participates in the biotransformation of inorganic arsenic and reduces monomethylarsonic acid (MMA). The chain is Probable glutathione transferase omega-2 (gsto-2) from Caenorhabditis elegans.